The chain runs to 496 residues: Cytochrome P450 71B1 (496 aa).

A heme-binding site is contributed by cysteine 436.

The protein belongs to the cytochrome P450 family. It depends on heme as a cofactor.

This Thlaspi arvense (Field penny-cress) protein is Cytochrome P450 71B1 (CYP71B1).